The chain runs to 441 residues: D-inositol 3-phosphate glycosyltransferase (441 aa).

His-38 lines the 1D-myo-inositol 3-phosphate pocket. UDP-N-acetyl-alpha-D-glucosamine is bound by residues 44-45 (QP) and Gly-52. 1D-myo-inositol 3-phosphate is bound by residues 49 to 54 (DAGGMN), Lys-107, Tyr-140, Thr-164, and Arg-184. Arg-258, Lys-263, and Gln-316 together coordinate UDP-N-acetyl-alpha-D-glucosamine. Residues Phe-325, Gln-326, and Ala-328 each contribute to the Mg(2+) site. Residues Glu-338 and Glu-346 each contribute to the UDP-N-acetyl-alpha-D-glucosamine site. Thr-352 is a binding site for Mg(2+).

It belongs to the glycosyltransferase group 1 family. MshA subfamily. In terms of assembly, homodimer.

The catalysed reaction is 1D-myo-inositol 3-phosphate + UDP-N-acetyl-alpha-D-glucosamine = 1D-myo-inositol 2-acetamido-2-deoxy-alpha-D-glucopyranoside 3-phosphate + UDP + H(+). Its function is as follows. Catalyzes the transfer of a N-acetyl-glucosamine moiety to 1D-myo-inositol 3-phosphate to produce 1D-myo-inositol 2-acetamido-2-deoxy-glucopyranoside 3-phosphate in the mycothiol biosynthesis pathway. This is D-inositol 3-phosphate glycosyltransferase from Mycolicibacterium paratuberculosis (strain ATCC BAA-968 / K-10) (Mycobacterium paratuberculosis).